Consider the following 358-residue polypeptide: Feruloyl esterase B (358 aa).

Positions 1–18 (MAIPLVLLLAWLLPTVFA) are cleaved as a signal peptide. The tract at residues 19–291 (ASLTQVSNFG…VSVVLDWFGI (273 aa)) is catalytic. Ser136 (charge relay system) is an active-site residue. Residues Asn179 and Asn246 are each glycosylated (N-linked (GlcNAc...) asparagine). The gly/Thr-rich linker stretch occupies residues 292–321 (TGGGGGNGGGSGSTTTTTSATTTSTGPTGG). Residues 297 to 318 (GNGGGSGSTTTTTSATTTSTGP) are disordered. Positions 304-318 (STTTTTSATTTSTGP) are enriched in low complexity. Residues 322 to 358 (CTAAHWDQCGGNGYTGCTSCASPYTCQKVNDYYSQCL) enclose the CBM1 domain.

Belongs to the carbohydrate esterase 1 (CE1) family. Feruloyl esterase type B subfamily.

It is found in the secreted. It carries out the reaction feruloyl-polysaccharide + H2O = ferulate + polysaccharide.. Its function is as follows. Involved in degradation of plant cell walls. Hydrolyzes the feruloyl-arabinose ester bond in arabinoxylans as well as the feruloyl-galactose and feruloyl-arabinose ester bonds in pectin. Active against methyl esters of caffeate (MCA), but not sinapate (MSA). The polypeptide is Feruloyl esterase B (faeB) (Talaromyces stipitatus (strain ATCC 10500 / CBS 375.48 / QM 6759 / NRRL 1006) (Penicillium stipitatum)).